The chain runs to 113 residues: Probable 4-amino-4-deoxy-L-arabinose-phosphoundecaprenol flippase subunit ArnE (113 aa).

The next 3 membrane-spanning stretches (helical) occupy residues 40-60 (FGWL…WLLV), 64-84 (LPLG…TLLA), and 92-112 (VDRH…LMQG).

Belongs to the ArnE family. Heterodimer of ArnE and ArnF.

The protein localises to the cell inner membrane. The protein operates within bacterial outer membrane biogenesis; lipopolysaccharide biosynthesis. In terms of biological role, translocates 4-amino-4-deoxy-L-arabinose-phosphoundecaprenol (alpha-L-Ara4N-phosphoundecaprenol) from the cytoplasmic to the periplasmic side of the inner membrane. The chain is Probable 4-amino-4-deoxy-L-arabinose-phosphoundecaprenol flippase subunit ArnE from Pectobacterium atrosepticum (strain SCRI 1043 / ATCC BAA-672) (Erwinia carotovora subsp. atroseptica).